Consider the following 129-residue polypeptide: Large ribosomal subunit protein bL12c (129 aa).

This sequence belongs to the bacterial ribosomal protein bL12 family. Homodimer. Part of the ribosomal stalk of the 50S ribosomal subunit. Forms a multimeric L10(L12)X complex, where L10 forms an elongated spine to which 2 to 4 L12 dimers bind in a sequential fashion. Binds GTP-bound translation factors.

It localises to the plastid. It is found in the chloroplast. In terms of biological role, forms part of the ribosomal stalk which helps the ribosome interact with GTP-bound translation factors. Is thus essential for accurate translation. In Porphyra purpurea (Red seaweed), this protein is Large ribosomal subunit protein bL12c.